Reading from the N-terminus, the 311-residue chain is Protein lifeguard 3 (311 aa).

2 disordered regions span residues Met1–Pro37 and Pro50–Gly72. The segment covering Tyr53–Pro62 has biased composition (pro residues). Phosphoserine occurs at positions 81 and 83. The next 7 helical transmembrane spans lie at Leu110–Val130, Val134–Cys154, Ile165–Met185, Ala190–Phe210, Gly221–Leu241, Val246–Ala266, and Ile286–Leu306.

Belongs to the BI1 family. LFG subfamily.

It localises to the membrane. It is found in the lysosome membrane. The protein localises to the endosome membrane. Functionally, negatively regulates aortic matrix metalloproteinase-9 (MMP9) production and may play a protective role in vascular remodeling. This chain is Protein lifeguard 3 (TMBIM1), found in Homo sapiens (Human).